The sequence spans 114 residues: Class I hydrophobin 6 (114 aa).

A signal peptide spans Met-1–Ala-19. 4 disulfides stabilise this stretch: Cys-33/Cys-93, Cys-40/Cys-87, Cys-41/Cys-74, and Cys-94/Cys-107. The N-linked (GlcNAc...) asparagine glycan is linked to Asn-42.

The protein belongs to the fungal hydrophobin family. In terms of assembly, self-assembles to form functional amyloid fibrils called rodlets. Self-assembly into fibrillar rodlets occurs spontaneously at hydrophobic:hydrophilic interfaces and the rodlets further associate laterally to form amphipathic monolayers.

The protein localises to the secreted. It is found in the cell wall. Aerial growth, conidiation, and dispersal of filamentous fungi in the environment rely upon a capability of their secreting small amphipathic proteins called hydrophobins (HPBs) with low sequence identity. Class I can self-assemble into an outermost layer of rodlet bundles on aerial cell surfaces, conferring cellular hydrophobicity that supports fungal growth, development and dispersal; whereas Class II form highly ordered films at water-air interfaces through intermolecular interactions but contribute nothing to the rodlet structure. The sequence is that of Class I hydrophobin 6 from Pleurotus ostreatus (strain PC15) (Oyster mushroom).